Here is a 118-residue protein sequence, read N- to C-terminus: Large ribosomal subunit protein bL21c (118 aa).

This sequence belongs to the bacterial ribosomal protein bL21 family. Part of the 50S ribosomal subunit.

It is found in the plastid. The protein resides in the chloroplast. Its function is as follows. This protein binds to 23S rRNA. In Psilotum nudum (Whisk fern), this protein is Large ribosomal subunit protein bL21c.